The following is a 291-amino-acid chain: 4-hydroxy-tetrahydrodipicolinate synthase (291 aa).

Thr-44 is a pyruvate binding site. Catalysis depends on Tyr-132, which acts as the Proton donor/acceptor. Catalysis depends on Lys-160, which acts as the Schiff-base intermediate with substrate. Ile-202 contacts pyruvate.

It belongs to the DapA family. In terms of assembly, homotetramer; dimer of dimers.

Its subcellular location is the cytoplasm. The enzyme catalyses L-aspartate 4-semialdehyde + pyruvate = (2S,4S)-4-hydroxy-2,3,4,5-tetrahydrodipicolinate + H2O + H(+). The protein operates within amino-acid biosynthesis; L-lysine biosynthesis via DAP pathway; (S)-tetrahydrodipicolinate from L-aspartate: step 3/4. Catalyzes the condensation of (S)-aspartate-beta-semialdehyde [(S)-ASA] and pyruvate to 4-hydroxy-tetrahydrodipicolinate (HTPA). The protein is 4-hydroxy-tetrahydrodipicolinate synthase of Rhodospirillum centenum (strain ATCC 51521 / SW).